A 287-amino-acid chain; its full sequence is Pyridoxal kinase PdxY (287 aa).

Substrate contacts are provided by residues serine 10 and 45–46 (TQ). ATP is bound by residues aspartate 112, alanine 144, glutamate 149, lysine 182, and 209–212 (RPLV). A substrate-binding site is contributed by aspartate 224.

It belongs to the pyridoxine kinase family. PdxY subfamily. As to quaternary structure, homodimer. The cofactor is Mg(2+).

It catalyses the reaction pyridoxal + ATP = pyridoxal 5'-phosphate + ADP + H(+). It functions in the pathway cofactor metabolism; pyridoxal 5'-phosphate salvage; pyridoxal 5'-phosphate from pyridoxal: step 1/1. Pyridoxal kinase involved in the salvage pathway of pyridoxal 5'-phosphate (PLP). Catalyzes the phosphorylation of pyridoxal to PLP. This chain is Pyridoxal kinase PdxY, found in Escherichia coli O6:H1 (strain CFT073 / ATCC 700928 / UPEC).